The chain runs to 583 residues: Proteasome-associated ATPase (583 aa).

The span at 1 to 19 (METPNQDSGRTPTEQSAAN) shows a compositional bias: polar residues. Residues 1–22 (METPNQDSGRTPTEQSAANDLS) are disordered. Positions 24–75 (ADRQVNILRDKLRHIDRQLAAATQNNTKLVSMLETAKAEILRLKNALDQEGQ) form a coiled coil. 271–276 (GCGKTL) is an ATP binding site. The tract at residues 582-583 (YL) is docks into pockets in the proteasome alpha-ring.

The protein belongs to the AAA ATPase family. As to quaternary structure, homohexamer. Assembles into a hexameric ring structure that caps the 20S proteasome core. Strongly interacts with the prokaryotic ubiquitin-like protein Pup through a hydrophobic interface; the interacting region of ARC lies in its N-terminal coiled-coil domain. There is one Pup binding site per ARC hexamer ring. Upon ATP-binding, the C-terminus of ARC interacts with the alpha-rings of the proteasome core, possibly by binding to the intersubunit pockets.

Its pathway is protein degradation; proteasomal Pup-dependent pathway. In terms of biological role, ATPase which is responsible for recognizing, binding, unfolding and translocation of pupylated proteins into the bacterial 20S proteasome core particle. May be essential for opening the gate of the 20S proteasome via an interaction with its C-terminus, thereby allowing substrate entry and access to the site of proteolysis. Thus, the C-termini of the proteasomal ATPase may function like a 'key in a lock' to induce gate opening and therefore regulate proteolysis. The sequence is that of Proteasome-associated ATPase from Pseudarthrobacter chlorophenolicus (strain ATCC 700700 / DSM 12829 / CIP 107037 / JCM 12360 / KCTC 9906 / NCIMB 13794 / A6) (Arthrobacter chlorophenolicus).